A 278-amino-acid polypeptide reads, in one-letter code: Large ribosomal subunit protein uL2 (278 aa).

The segment at 211–278 (KRWLGKRPQS…LIIRRRKGSK (68 aa)) is disordered. The span at 258–270 (KTRDTKKASEKLI) shows a compositional bias: basic and acidic residues.

Belongs to the universal ribosomal protein uL2 family. As to quaternary structure, part of the 50S ribosomal subunit. Forms a bridge to the 30S subunit in the 70S ribosome.

In terms of biological role, one of the primary rRNA binding proteins. Required for association of the 30S and 50S subunits to form the 70S ribosome, for tRNA binding and peptide bond formation. It has been suggested to have peptidyltransferase activity; this is somewhat controversial. Makes several contacts with the 16S rRNA in the 70S ribosome. The protein is Large ribosomal subunit protein uL2 of Lactobacillus helveticus (strain DPC 4571).